Reading from the N-terminus, the 166-residue chain is RNA pyrophosphohydrolase (166 aa).

Residues 6–149 (GFRPNVGIIL…KRDVYRKAMM (144 aa)) enclose the Nudix hydrolase domain. Residues 38–59 (GGIHFGETPEQALYRELREEVG) carry the Nudix box motif.

Belongs to the Nudix hydrolase family. RppH subfamily. A divalent metal cation is required as a cofactor.

Functionally, accelerates the degradation of transcripts by removing pyrophosphate from the 5'-end of triphosphorylated RNA, leading to a more labile monophosphorylated state that can stimulate subsequent ribonuclease cleavage. This chain is RNA pyrophosphohydrolase, found in Acinetobacter baylyi (strain ATCC 33305 / BD413 / ADP1).